The sequence spans 334 residues: N-acetyl-gamma-glutamyl-phosphate reductase (334 aa).

Cysteine 154 is a catalytic residue.

This sequence belongs to the NAGSA dehydrogenase family. Type 1 subfamily.

Its subcellular location is the cytoplasm. It carries out the reaction N-acetyl-L-glutamate 5-semialdehyde + phosphate + NADP(+) = N-acetyl-L-glutamyl 5-phosphate + NADPH + H(+). It participates in amino-acid biosynthesis; L-arginine biosynthesis; N(2)-acetyl-L-ornithine from L-glutamate: step 3/4. Its function is as follows. Catalyzes the NADPH-dependent reduction of N-acetyl-5-glutamyl phosphate to yield N-acetyl-L-glutamate 5-semialdehyde. The sequence is that of N-acetyl-gamma-glutamyl-phosphate reductase from Buchnera aphidicola subsp. Schizaphis graminum (strain Sg).